The sequence spans 323 residues: ADP/ATP translocase 4 (323 aa).

The Mitochondrial intermembrane segment spans residues 1–23 (MQREPPKRKQEKKVEKGLFDATS). The stretch at 22–114 (TSFGKDLLAG…FAFKDKYKQL (93 aa)) is one Solcar 1 repeat. A helical transmembrane segment spans residues 24-53 (FGKDLLAGGVAAAVSKTTVAPIERVKLLLQ). Residues 54-90 (VQASSKQISPEAQYKGIVDCLVRIPREQGFLSYWRGN) lie on the Mitochondrial matrix side of the membrane. The helical transmembrane segment at 91 to 115 (LANVIRYFPTQALNFAFKDKYKQLF) threads the bilayer. Positions 96 and 108 each coordinate ADP. Over 116–125 (MSGVNKEKQF) the chain is Mitochondrial intermembrane. A helical membrane pass occupies residues 126–146 (WRWFLANLASGGAAGATSLCV). 2 Solcar repeats span residues 127 to 217 (RWFL…VKGL) and 224 to 311 (THFL…IKDL). Residues 147–194 (VYPLDFARTRLGADIGKGPEERQFKGLGDCIMKIAKSDGIVGLYQGFG) are Mitochondrial matrix-facing. Residues 195 to 215 (VSVQGIIVYRASYFGAYDTVK) traverse the membrane as a helical segment. Residues 216–226 (GLLPKPKETHF) are Mitochondrial intermembrane-facing. A helical membrane pass occupies residues 227 to 247 (LVSFFIAQVVTTCSGILSYPF). The Mitochondrial matrix portion of the chain corresponds to 248–287 (DTVRRRMMMQSGEAERQYKGTLDCFMKIYQQEGIGAFFRG). Arginine 251 lines the ADP pocket. The important for transport activity stretch occupies residues 251–256 (RRRMMM). Residues 251-256 (RRRMMM) carry the Nucleotide carrier signature motif motif. Residues 288–305 (AFSNILRGTGGALVLVLY) form a helical membrane-spanning segment. Residues 306–323 (DKIKDLLNIDIGGSSSGD) lie on the Mitochondrial intermembrane side of the membrane.

Belongs to the mitochondrial carrier (TC 2.A.29) family. As to quaternary structure, monomer.

It is found in the mitochondrion inner membrane. Its subcellular location is the membrane. The protein resides in the cell projection. It localises to the cilium. The protein localises to the flagellum membrane. The catalysed reaction is ADP(in) + ATP(out) = ADP(out) + ATP(in). The enzyme catalyses dATP(out) + ADP(in) = dATP(in) + ADP(out). It carries out the reaction dADP(in) + ADP(out) = dADP(out) + ADP(in). It catalyses the reaction H(+)(in) = H(+)(out). Its activity is regulated as follows. The matrix-open state (m-state) is inhibited by the membrane-permeable bongkrekic acid (BKA). The cytoplasmic-open state (c-state) is inhibited by the membrane-impermeable toxic inhibitor carboxyatractyloside (CATR). Proton transporter activity is inhibited by ADP:ATP antiporter activity. Functionally, ADP:ATP antiporter that mediates import of ADP into the mitochondrial matrix for ATP synthesis, and export of ATP out to fuel the cell. Cycles between the cytoplasmic-open state (c-state) and the matrix-open state (m-state): operates by the alternating access mechanism with a single substrate-binding site intermittently exposed to either the cytosolic (c-state) or matrix (m-state) side of the inner mitochondrial membrane. Specifically required during spermatogenesis, probably to mediate ADP:ATP exchange in spermatocytes. Large ATP supplies from mitochondria may be critical for normal progression of spermatogenesis during early stages of meiotic prophase I, including DNA double-strand break repair and chromosomal synapsis. In addition to its ADP:ATP antiporter activity, also involved in mitochondrial uncoupling and mitochondrial permeability transition pore (mPTP) activity. Plays a role in mitochondrial uncoupling by acting as a proton transporter: proton transport uncouples the proton flows via the electron transport chain and ATP synthase to reduce the efficiency of ATP production and cause mitochondrial thermogenesis. Proton transporter activity is inhibited by ADP:ATP antiporter activity, suggesting that SLC25A31/ANT4 acts as a master regulator of mitochondrial energy output by maintaining a delicate balance between ATP production (ADP:ATP antiporter activity) and thermogenesis (proton transporter activity). Proton transporter activity requires free fatty acids as cofactor, but does not transport it. Among nucleotides, may also exchange ADP for dATP and dADP. Also plays a key role in mPTP opening, a non-specific pore that enables free passage of the mitochondrial membranes to solutes of up to 1.5 kDa, and which contributes to cell death. It is however unclear if SLC25A31/ANT4 constitutes a pore-forming component of mPTP or regulates it. In Bos taurus (Bovine), this protein is ADP/ATP translocase 4.